A 718-amino-acid chain; its full sequence is Kelch-like protein 4 (718 aa).

The interval 46–69 is disordered; it reads TPVQGRLKSHSRDRNGLKKSNSPV. The BTB domain maps to 182-249; sequence CDVLLIAGHL…AYTGVLQLKE (68 aa). Kelch repeat units lie at residues 430-476, 477-523, 525-570, 571-617, 619-670, and 671-717; these read ALYA…VIDN, KLYV…TLEG, MYAV…ALNN, KLYA…TYNG, LYVV…PLGD, and KLYV…VVKL.

As to expression, expressed in adult fibroblasts and in a range of fetal tissues including tongue, palate, and mandible.

The protein resides in the cytoplasm. Its subcellular location is the cytoskeleton. The protein is Kelch-like protein 4 (KLHL4) of Homo sapiens (Human).